Reading from the N-terminus, the 510-residue chain is Probable malate:quinone oxidoreductase (510 aa).

It belongs to the MQO family. Requires FAD as cofactor.

The enzyme catalyses (S)-malate + a quinone = a quinol + oxaloacetate. Its pathway is carbohydrate metabolism; tricarboxylic acid cycle; oxaloacetate from (S)-malate (quinone route): step 1/1. In Wigglesworthia glossinidia brevipalpis, this protein is Probable malate:quinone oxidoreductase.